The primary structure comprises 234 residues: Endonuclease V (234 aa).

Mg(2+) is bound by residues Asp-36 and Asp-104.

This sequence belongs to the endonuclease V family. It depends on Mg(2+) as a cofactor.

It is found in the cytoplasm. It catalyses the reaction Endonucleolytic cleavage at apurinic or apyrimidinic sites to products with a 5'-phosphate.. Its function is as follows. DNA repair enzyme involved in the repair of deaminated bases. Selectively cleaves double-stranded DNA at the second phosphodiester bond 3' to a deoxyinosine leaving behind the intact lesion on the nicked DNA. The protein is Endonuclease V of Yersinia pseudotuberculosis serotype O:1b (strain IP 31758).